The sequence spans 441 residues: Protein kinase C and casein kinase substrate in neurons protein 1 (441 aa).

Residues Ser2 and Ser76 each carry the phosphoserine modification. An F-BAR domain is found at 10 to 280 (EEITDSFWEV…AIRGADAQED (271 aa)). Residues 23–272 (KRTVKRIDDG…HVYRELEQAI (250 aa)) adopt a coiled-coil conformation. Thr181 bears the Phosphothreonine mark. The segment at 310–380 (AAKKEKQPKK…ANGGANPFED (71 aa)) is disordered. Residues 311–321 (AKKEKQPKKAE) are compositionally biased toward basic and acidic residues. Over residues 326 to 348 (SNATGAVESTSQAGDRGSVSSYD) the composition is skewed to polar residues. Phosphoserine is present on residues Ser343, Ser345, Ser346, Ser358, and Ser362. Positions 382–441 (AKGVRVRALYDYDGQEQDELSFKAGDELTKLGEEDEQGWCRGRLDSGQLGLYPANYVEAI) constitute an SH3 domain. Tyr391 carries the post-translational modification Phosphotyrosine. Ser402 and Ser427 each carry phosphoserine.

This sequence belongs to the PACSIN family. Homodimer. May form heterooligomers with other PACSINs. Interacts with MAPT. Interacts with TRPV4. Interacts (via SH3 domain) with SYNJ1 and WASL. Interacts (via SH3 domain) with DNM1; the interaction is reduced by DNM1 phosphorylation. Interacts with DNM2 and DNM3. Interacts with both COBL and DBNL. Identified in a complex composed of COBL, PACSIN1 and WASL. Interacts with EHD1 and EHD3. Post-translationally, phosphorylated by casein kinase 2 (CK2) and protein kinase C (PKC). As to expression, highly expressed in brain (at protein level).

It is found in the cytoplasm. Its subcellular location is the cell projection. The protein resides in the synapse. It localises to the synaptosome. The protein localises to the ruffle membrane. It is found in the membrane. Its subcellular location is the cytoplasmic vesicle membrane. The protein resides in the cytosol. It localises to the cell membrane. Binds to membranes via its F-BAR domain and mediates membrane tubulation. Plays a role in the reorganization of the microtubule cytoskeleton via its interaction with MAPT; this decreases microtubule stability and inhibits MAPT-induced microtubule polymerization. Plays a role in cellular transport processes by recruiting DNM1, DNM2 and DNM3 to membranes. Plays a role in the reorganization of the actin cytoskeleton and in neuron morphogenesis via its interaction with COBL and WASL, and by recruiting COBL to the cell cortex. Plays a role in the regulation of neurite formation, neurite branching and the regulation of neurite length. Required for normal synaptic vesicle endocytosis; this process retrieves previously released neurotransmitters to accommodate multiple cycles of neurotransmission. Required for normal excitatory and inhibitory synaptic transmission. The protein is Protein kinase C and casein kinase substrate in neurons protein 1 (Pacsin1) of Rattus norvegicus (Rat).